Here is a 97-residue protein sequence, read N- to C-terminus: Large ribosomal subunit protein uL30m (97 aa).

It belongs to the universal ribosomal protein uL30 family. Component of the mitochondrial large ribosomal subunit (mt-LSU). Mature yeast 74S mitochondrial ribosomes consist of a small (37S) and a large (54S) subunit. The 37S small subunit contains a 15S ribosomal RNA (15S mt-rRNA) and at least 32 different proteins. The 54S large subunit contains a 21S rRNA (21S mt-rRNA) and at least 45 different proteins.

The protein resides in the mitochondrion. In terms of biological role, component of the mitochondrial ribosome (mitoribosome), a dedicated translation machinery responsible for the synthesis of mitochondrial genome-encoded proteins, including at least some of the essential transmembrane subunits of the mitochondrial respiratory chain. The mitoribosomes are attached to the mitochondrial inner membrane and translation products are cotranslationally integrated into the membrane. The chain is Large ribosomal subunit protein uL30m (mrpl33) from Schizosaccharomyces pombe (strain 972 / ATCC 24843) (Fission yeast).